The chain runs to 557 residues: Estrogen receptor beta (557 aa).

Positions 1 to 154 are modulating; sequence MMAAASSPEK…SSGGKADLHY (154 aa). 2 NR C4-type zinc fingers span residues 155–175 and 191–215; these read CAVC…CEGC and CPAT…LRKC. The segment at residues 155–220 is a DNA-binding region (nuclear receptor); the sequence is CAVCHDYASG…RLRKCYEVGM (66 aa). The segment at 240–268 is disordered; that stretch reads LTRLSSQGKTAEPKGITGPAEGSLNKPEK. Residues 272-508 enclose the NR LBD domain; sequence TPEQLIERIL…DLLLEMLDAH (237 aa). A disordered region spans residues 513–557; the sequence is SCLPHQPPQQDSKDQSEVPAPLHSSAGGPSNTWTPSSARAGGESQ. A compositionally biased stretch (polar residues) spans 539 to 557; the sequence is GGPSNTWTPSSARAGGESQ.

The protein belongs to the nuclear hormone receptor family. NR3 subfamily. In terms of assembly, binds DNA as a homodimer. Can form a heterodimer with ER-alpha.

It is found in the nucleus. Functionally, binds estrogens with an affinity similar to that of ER-alpha, and activates expression of reporter genes containing estrogen response elements (ERE) in an estrogen-dependent manner. The chain is Estrogen receptor beta (esr2) from Oreochromis niloticus (Nile tilapia).